A 203-amino-acid polypeptide reads, in one-letter code: Urease accessory protein UreG (203 aa).

Residue 14-21 coordinates GTP; the sequence is GPVGAGKT.

The protein belongs to the SIMIBI class G3E GTPase family. UreG subfamily. In terms of assembly, homodimer. UreD, UreF and UreG form a complex that acts as a GTP-hydrolysis-dependent molecular chaperone, activating the urease apoprotein by helping to assemble the nickel containing metallocenter of UreC. The UreE protein probably delivers the nickel.

It localises to the cytoplasm. Functionally, facilitates the functional incorporation of the urease nickel metallocenter. This process requires GTP hydrolysis, probably effectuated by UreG. The protein is Urease accessory protein UreG of Jannaschia sp. (strain CCS1).